The chain runs to 370 residues: Doublesex- and mab-3-related transcription factor C2 (370 aa).

The disordered stretch occupies residues 1-38 (MDPSETAALHHCSADSSPADEARVPQSTELIPRRPVSR). The segment at residues 42–89 (CARCRNHGVTAHLKGHKRLCLFQACECHKCVLILERRRVMAAQVALRR) is a DNA-binding region (DM). A disordered region spans residues 334 to 356 (APPGGRGFQPVGPPLRPSPGSSV).

The protein belongs to the DMRT family. Expressed in testis. Highly expressed in ovary.

The protein localises to the nucleus. Its function is as follows. May be involved in sexual development. This chain is Doublesex- and mab-3-related transcription factor C2 (Dmrtc2), found in Mus musculus (Mouse).